The primary structure comprises 244 residues: Cysteine-rich secretory protein 1 (244 aa).

A signal peptide spans methionine 1–leucine 19. An SCP domain is found at serine 44–tyrosine 170. A glycan (N-linked (GlcNAc...) asparagine) is linked at asparagine 145. Cystine bridges form between cysteine 190-cysteine 197, cysteine 193-cysteine 202, cysteine 206-cysteine 239, cysteine 215-cysteine 233, and cysteine 224-cysteine 237. Residues cysteine 206–cysteine 239 form the ShKT domain.

This sequence belongs to the CRISP family. Mainly found in the cauda epididymis where it is synthesized by the principal cells and secreted into the lumen. Binds to the heads of spermatozoa. Also expressed in the submandibular gland.

Its subcellular location is the cytoplasmic vesicle. It localises to the secretory vesicle. This protein is supposed to help spermatozoa undergo functional maturation while they move from the testis to the ductus deferens. The polypeptide is Cysteine-rich secretory protein 1 (Crisp1) (Mus musculus (Mouse)).